Reading from the N-terminus, the 266-residue chain is Type II iodothyronine deiodinase (266 aa).

Over 1 to 9 (MGLLSVDLL) the chain is Lumenal. The helical; Signal-anchor for type III membrane protein transmembrane segment at 10–34 (ITLQILPVFFSNCLFLALYDSVILL) threads the bilayer. Over 35–266 (KHVALLLSRS…KNFSKRUILD (232 aa)) the chain is Cytoplasmic. The active site involves Sec130. 2 non-standard amino acids (selenocysteine) are found at residues Sec130 and Sec263.

Belongs to the iodothyronine deiodinase family. Predominantly monomer. Can form homodimers but homodimerization is not essential for enzyme activity. Interacts with USP20 and USP33. Interacts with MARCHF6. Ubiquitinated by MARCHF6, leading to its degradation by the proteasome. Deubiquitinated by USP20 and USP33. In terms of tissue distribution, expressed in mammary gland and in brain.

The protein localises to the endoplasmic reticulum membrane. The catalysed reaction is 3,3',5-triiodo-L-thyronine + iodide + A + H(+) = L-thyroxine + AH2. It carries out the reaction 3,3'-diiodo-L-thyronine + iodide + A + H(+) = 3,3',5'-triiodo-L-thyronine + AH2. It catalyses the reaction 3'-iodo-L-thyronine + iodide + A + H(+) = 3',5'-diiodo-L-thyronine + AH2. The enzyme catalyses 3,3'-diiodothyronamine + iodide + A + H(+) = 3,3',5'-triiodothyronamine + AH2. The catalysed reaction is 3'-iodothyronamine + iodide + A + H(+) = 3',5'-diiodothyronamine + AH2. In terms of biological role, plays a crucial role in the metabolism of thyroid hormones (TH) and has specific roles in TH activation and inactivation by deiodination. Catalyzes the deiodination of L-thyroxine (T4) to 3,5,3'-triiodothyronine (T3) and 3,3',5'-triiodothyronine (rT3) to 3,3'-diiodothyronine (3,3'-T2) via outer-ring deiodination (ORD). Catalyzes the deiodination of 3',5'-diiodothyronine (3',5'-T2) to 3'-monoiodothyronine (3'-T1) via ORD. Catalyzes the phenolic ring deiodinations of 3,3',5'-triiodothyronamine and 3',5'- diiodothyronamine. This Mus musculus (Mouse) protein is Type II iodothyronine deiodinase (Dio2).